A 384-amino-acid polypeptide reads, in one-letter code: Cyanate transport protein CynX (384 aa).

The next 12 helical transmembrane spans lie at 3–23 (LVLV…GPLL), 34–54 (FSVA…LALA), 68–88 (VAIS…YPQS), 89–109 (ALLL…QAVM), 122–142 (PLVM…GAAI), 153–173 (WYQT…AWWW), 204–224 (YFGL…AFYI), 235–255 (SLLA…PAMA), 263–283 (LLML…WLPM), 287–307 (VLWA…CLLL), 322–342 (VAFM…FSGV), and 354–374 (WAFH…FAPV).

Belongs to the major facilitator superfamily. Cyanate porter (TC 2.A.1.17) family.

Its subcellular location is the cell inner membrane. Functionally, this protein is part of an active transport system that transports exogenous cyanate into E.coli cells. This is Cyanate transport protein CynX (cynX) from Escherichia coli (strain K12).